The following is a 336-amino-acid chain: Ketol-acid reductoisomerase (NADP(+)) 1 (336 aa).

The KARI N-terminal Rossmann domain occupies 2 to 181; that stretch reads AKVYYEKDVT…GATRAGVLET (180 aa). NADP(+)-binding positions include 25–28, R48, S52, and 82–85; these read YGSQ and DELQ. H107 is an active-site residue. NADP(+) is bound at residue G133. One can recognise a KARI C-terminal knotted domain in the interval 182-327; that stretch reads TFKEETETDL…RKLRGMMPFV (146 aa). Mg(2+)-binding residues include D190, E194, E226, and E230. Position 251 (S251) interacts with substrate.

Belongs to the ketol-acid reductoisomerase family. It depends on Mg(2+) as a cofactor.

The enzyme catalyses (2R)-2,3-dihydroxy-3-methylbutanoate + NADP(+) = (2S)-2-acetolactate + NADPH + H(+). It carries out the reaction (2R,3R)-2,3-dihydroxy-3-methylpentanoate + NADP(+) = (S)-2-ethyl-2-hydroxy-3-oxobutanoate + NADPH + H(+). It participates in amino-acid biosynthesis; L-isoleucine biosynthesis; L-isoleucine from 2-oxobutanoate: step 2/4. It functions in the pathway amino-acid biosynthesis; L-valine biosynthesis; L-valine from pyruvate: step 2/4. Functionally, involved in the biosynthesis of branched-chain amino acids (BCAA). Catalyzes an alkyl-migration followed by a ketol-acid reduction of (S)-2-acetolactate (S2AL) to yield (R)-2,3-dihydroxy-isovalerate. In the isomerase reaction, S2AL is rearranged via a Mg-dependent methyl migration to produce 3-hydroxy-3-methyl-2-ketobutyrate (HMKB). In the reductase reaction, this 2-ketoacid undergoes a metal-dependent reduction by NADPH to yield (R)-2,3-dihydroxy-isovalerate. The sequence is that of Ketol-acid reductoisomerase (NADP(+)) 1 from Bacillus anthracis.